Reading from the N-terminus, the 379-residue chain is CCN family member 1 (379 aa).

The N-terminal stretch at 1-24 is a signal peptide; the sequence is MSSSTIKTLAVAVTLLHLTRLALS. The 70-residue stretch at 25-94 folds into the IGFBP N-terminal domain; the sequence is TCPAACHCPL…TALKGICRAQ (70 aa). 6 disulfide bridges follow: Cys-26–Cys-50, Cys-30–Cys-52, Cys-32–Cys-53, Cys-39–Cys-56, Cys-64–Cys-78, and Cys-70–Cys-91. In terms of domain architecture, VWFC spans 98–164; sequence RPCEYNSRIY…GQCCEEWVCD (67 aa). The residue at position 184 (Ser-184) is a Phosphoserine. Residues 226–271 enclose the TSP type-1 domain; the sequence is KCIVQTTSWSQCSKSCGTGISTRVTNDNSECRLVKETRICEVRPCG. Positions 277 to 313 are heparin-binding; sequence SLKKGKKCSKTKKSPEPVRFTYAGCSSVKKYRPKYCG. Cystine bridges form between Cys-284–Cys-321, Cys-301–Cys-335, Cys-312–Cys-351, Cys-315–Cys-353, and Cys-320–Cys-357. The region spanning 284-358 is the CTCK domain; the sequence is CSKTKKSPEP…QSCKCNYNCP (75 aa).

It belongs to the CCN family. In terms of assembly, interaction with integrins is heparin- and cell-type-dependent and promotes cell adhesion.

The protein localises to the secreted. Its function is as follows. Promotes cell proliferation, chemotaxis, angiogenesis and cell adhesion. Appears to play a role in wound healing by up-regulating, in skin fibroblasts, the expression of a number of genes involved in angiogenesis, inflammation and matrix remodeling including VEGA-A, VEGA-C, MMP1, MMP3, TIMP1, uPA, PAI-1 and integrins alpha-3 and alpha-5. CCN1-mediated gene regulation is dependent on heparin-binding. Down-regulates the expression of alpha-1 and alpha-2 subunits of collagen type-1. Promotes cell adhesion and adhesive signaling through integrin alpha-6/beta-1, cell migration through integrin alpha-1/beta-5 and cell proliferation through integrin alpha-v/beta-3. The chain is CCN family member 1 from Rattus norvegicus (Rat).